Reading from the N-terminus, the 68-residue chain is Preprofallaxidin-5 (68 aa).

Residues 1 to 22 (MASLKKSLFLVLFLGFVSLSIC) form the signal peptide. Positions 23 to 51 (EEEKREDKEDEGENEEAEENHEERSEEKR) are excised as a propeptide. The segment at 24 to 50 (EEKREDKEDEGENEEAEENHEERSEEK) is disordered. The segment covering 30–42 (KEDEGENEEAEEN) has biased composition (acidic residues). The residue at position 64 (L64) is a Leucine amide. S68 is a propeptide.

This sequence belongs to the frog skin active peptide (FSAP) family. Brevinin subfamily. In terms of tissue distribution, expressed by the skin glands.

The protein localises to the secreted. This chain is Preprofallaxidin-5, found in Litoria fallax (Eastern dwarf tree frog).